The sequence spans 271 residues: Phosphate import ATP-binding protein PstB (271 aa).

Positions 24–266 constitute an ABC transporter domain; it reads MIGNDVSVYY…PDDQRTQDYI (243 aa). Residue 56–63 coordinates ATP; that stretch reads GPSGCGKS.

It belongs to the ABC transporter superfamily. Phosphate importer (TC 3.A.1.7) family. As to quaternary structure, the complex is composed of two ATP-binding proteins (PstB), two transmembrane proteins (PstC and PstA) and a solute-binding protein (PstS).

The protein localises to the cell inner membrane. The catalysed reaction is phosphate(out) + ATP + H2O = ADP + 2 phosphate(in) + H(+). Its function is as follows. Part of the ABC transporter complex PstSACB involved in phosphate import. Responsible for energy coupling to the transport system. This Rhizobium meliloti (strain 1021) (Ensifer meliloti) protein is Phosphate import ATP-binding protein PstB.